Here is a 51-residue protein sequence, read N- to C-terminus: uncharacterized protein (51 aa).

This protein is non-essential for virus function. This is an uncharacterized protein from Sulfolobus spindle-shape virus 1 (SSV1).